The following is a 249-amino-acid chain: DNA polymerase sliding clamp (249 aa).

This sequence belongs to the PCNA family. In terms of assembly, the subunits circularize to form a toroid; DNA passes through its center. Replication factor C (RFC) is required to load the toroid on the DNA. Homotrimer. Interacts with NucS.

Functionally, sliding clamp subunit that acts as a moving platform for DNA processing. Responsible for tethering the catalytic subunit of DNA polymerase and other proteins to DNA during high-speed replication. Regulates activity of NucS endonuclease and prevents non-specific cleavage. The chain is DNA polymerase sliding clamp from Pyrococcus abyssi (strain GE5 / Orsay).